The following is a 519-amino-acid chain: Voltage-gated potassium channel regulatory subunit KCNG4 (519 aa).

Residues 1 to 25 (MPMPSRDGGLHPRHHHYGSHSPWSQ) are disordered. Residues 1–218 (MPMPSRDGGL…EMVENPQSGL (218 aa)) lie on the Cytoplasmic side of the membrane. The helical transmembrane segment at 219 to 240 (PGKVFACLSILFVATTAVSLCV) threads the bilayer. Residues 241 to 261 (STMPDLRAEEDQGECSRKCYY) lie on the Extracellular side of the membrane. Residues 262–283 (IFIVETICVAWFSLEFCLRFVQ) traverse the membrane as a helical segment. The Cytoplasmic portion of the chain corresponds to 284-294 (AQDKCQFFQGP). The chain crosses the membrane as a helical span at residues 295 to 314 (LNIIDILAISPYYVSLAVSE). Residues 315 to 328 (EPPEDGERPSGSSY) lie on the Extracellular side of the membrane. The helical; Voltage-sensor transmembrane segment at 329–353 (LEKVGLVLRVLRALRILYVMRLARH) threads the bilayer. The Cytoplasmic segment spans residues 354 to 368 (SLGLQTLGLTVRRCT). The chain crosses the membrane as a helical span at residues 369–390 (REFGLLLLFLAVAITLFSPLVY). Residues 391–405 (VAEKESGRVLEFTSI) lie on the Extracellular side of the membrane. Positions 406–417 (PASYWWAIISMT) form an intramembrane region, helical. The Selectivity filter signature appears at 418–423 (TVGYGD). The stretch at 418–425 (TVGYGDMV) is an intramembrane region. Over 426 to 432 (PRSVPGQ) the chain is Extracellular. The helical transmembrane segment at 433-461 (MVALSSILSGILIMAFPATSIFHTFSHSY) threads the bilayer. The Cytoplasmic segment spans residues 462-519 (LELKKEQEQLQARLRHLQNTGPASECELLDPHVASEHELMNDVNDLILEGPALPIMHM).

This sequence belongs to the potassium channel family. G (TC 1.A.1.2) subfamily. Kv6.4/KCNG4 sub-subfamily. Heterotetramer with KCNB1. Does not form homomultimer. Highly expressed in brain, and at lower levels in liver, small intestine and colon.

It localises to the cell membrane. Regulatory subunit of the voltage-gated potassium (Kv) channel which, when coassembled with KCNB1, modulates the kinetics parameters of the heterotetrameric channel namely the time course of activation, deactivation and inactivation and on the voltage-dependence of activation. Potassium channel subunit that does not form functional channels by itself. Reduces the deactivation rate. Modulates the threshold for activation by shifting by approximately 20 mV in hyperpolarizing direction. Markedly changes the inactivation by shifting the voltage dependence of inactivation by approximately 40 mV in hyperpolarizing direction. Acceleratee activation and enhances the time course of activation. The chain is Voltage-gated potassium channel regulatory subunit KCNG4 from Homo sapiens (Human).